The sequence spans 244 residues: NAD(P)H-quinone oxidoreductase subunit K (244 aa).

Residues cysteine 51, cysteine 52, cysteine 116, and cysteine 147 each contribute to the [4Fe-4S] cluster site.

It belongs to the complex I 20 kDa subunit family. NDH-1 can be composed of about 15 different subunits; different subcomplexes with different compositions have been identified which probably have different functions. Requires [4Fe-4S] cluster as cofactor.

The protein resides in the cellular thylakoid membrane. It carries out the reaction a plastoquinone + NADH + (n+1) H(+)(in) = a plastoquinol + NAD(+) + n H(+)(out). The enzyme catalyses a plastoquinone + NADPH + (n+1) H(+)(in) = a plastoquinol + NADP(+) + n H(+)(out). NDH-1 shuttles electrons from an unknown electron donor, via FMN and iron-sulfur (Fe-S) centers, to quinones in the respiratory and/or the photosynthetic chain. The immediate electron acceptor for the enzyme in this species is believed to be plastoquinone. Couples the redox reaction to proton translocation, and thus conserves the redox energy in a proton gradient. Cyanobacterial NDH-1 also plays a role in inorganic carbon-concentration. In Synechococcus sp. (strain JA-2-3B'a(2-13)) (Cyanobacteria bacterium Yellowstone B-Prime), this protein is NAD(P)H-quinone oxidoreductase subunit K.